Here is a 181-residue protein sequence, read N- to C-terminus: MICGIDEVGRGCIFGPILSAAVVFKKKPNFIKELDDSKKLTKEKREYLSSLILENSYYAFGEISNITIEKINIHNASLLAMQTAYENLKLNCNLVFIDGKFVPKISAKNVKAIIKGDSIIDEIKAASIIAKVKRDKLMDEYDKIYPLYLLKKNKGYPTKEHKNAIKKYGVLSLHRKNFKLI.

The 181-residue stretch at 1–181 (MICGIDEVGR…SLHRKNFKLI (181 aa)) folds into the RNase H type-2 domain. 3 residues coordinate a divalent metal cation: aspartate 6, glutamate 7, and aspartate 98.

This sequence belongs to the RNase HII family. It depends on Mn(2+) as a cofactor. Mg(2+) serves as cofactor.

It localises to the cytoplasm. The enzyme catalyses Endonucleolytic cleavage to 5'-phosphomonoester.. Endonuclease that specifically degrades the RNA of RNA-DNA hybrids. The chain is Ribonuclease HII from Borreliella afzelii (strain PKo) (Borrelia afzelii).